Here is a 219-residue protein sequence, read N- to C-terminus: Ras-related protein Rab-3B (219 aa).

Residue alanine 2 is modified to N-acetylalanine. Residues serine 31, serine 32, valine 33, glycine 34, lysine 35, threonine 36, serine 37, proline 49, and serine 53 each coordinate GTP. Threonine 36 serves as a coordination point for Mg(2+). The Switch 1 motif lies at 45–58; sequence DTFTPAFVSTVGID. Residues threonine 54 and aspartate 77 each contribute to the Mg(2+) site. Positions 78–96 match the Switch 2 motif; sequence TAGQERYRTITTAYYRGAM. Glycine 80 is a GTP binding site. Threonine 86 bears the Phosphothreonine mark. GTP is bound by residues asparagine 135, lysine 136, aspartate 138, alanine 166, and lysine 167. Phosphoserine occurs at positions 188 and 190. Residues cysteine 217 and cysteine 219 are each lipidated (S-geranylgeranyl cysteine). Residue cysteine 219 is modified to Cysteine methyl ester.

It belongs to the small GTPase superfamily. Rab family. In terms of assembly, interacts with RIMS1, RIMS2, RPH3A and RPH3AL. The GTP-bound form interacts with GAS8/DRC4 (via coiled-coil domains). Interacts with GDI2, CHM and CHML; phosphorylation at Thr-86 disrupts these interactions. Interacts with MADD (via uDENN domain); the GTP-bound form is preferred for interaction. Requires Mg(2+) as cofactor. Post-translationally, phosphorylation of Thr-86 in the switch II region by LRRK2 prevents the association of RAB regulatory proteins, including CHM, CHML and RAB GDP dissociation inhibitor GDI2.

The protein resides in the cell membrane. Its subcellular location is the golgi apparatus. It carries out the reaction GTP + H2O = GDP + phosphate + H(+). With respect to regulation, regulated by guanine nucleotide exchange factors (GEFs) which promote the exchange of bound GDP for free GTP. Regulated by GTPase activating proteins (GAPs) which increase the GTP hydrolysis activity. Inhibited by GDP dissociation inhibitors (GDIs) which prevent Rab-GDP dissociation. Functionally, the small GTPases Rab are key regulators of intracellular membrane trafficking, from the formation of transport vesicles to their fusion with membranes. Rabs cycle between an inactive GDP-bound form and an active GTP-bound form that is able to recruit to membranes different sets of downstream effectors directly responsible for vesicle formation, movement, tethering and fusion. The sequence is that of Ras-related protein Rab-3B (RAB3B) from Mesocricetus auratus (Golden hamster).